A 69-amino-acid polypeptide reads, in one-letter code: U2-agatoxin-Ao1i (69 aa).

The N-terminal stretch at 1–20 (MKAIISLLLISAMVFSMIEA) is a signal peptide. The propeptide occupies 21–34 (VPVXXGLQLFESER). 3 disulfides stabilise this stretch: Cys-36–Cys-52, Cys-43–Cys-57, and Cys-51–Cys-67. Residue Leu-68 is modified to Leucine amide.

It belongs to the neurotoxin 01 (U2-agtx) family. As to expression, expressed by the venom gland.

It is found in the secreted. Functionally, insect active toxin causing rapid but reversible paralysis in crickets. No activity shown in mammals. Does not show effect on mammalian voltage-gated calcium channels. The sequence is that of U2-agatoxin-Ao1i from Agelena orientalis (Funnel-web spider).